Reading from the N-terminus, the 215-residue chain is Cytochrome b6 (215 aa).

The helical transmembrane segment at 32-52 (IFYCLGGITLTCFLVQVATGF) threads the bilayer. C35 contributes to the heme c binding site. Heme b is bound by residues H86 and H100. 3 helical membrane-spanning segments follow: residues 90 to 110 (ASMMVLMMILHVFRVYLTGGF), 116 to 136 (LTWVTGVVLAVLTASFGVTGY), and 186 to 206 (LHTFVLPLLTAVFMLMHFPMI). Heme b is bound by residues H187 and H202.

This sequence belongs to the cytochrome b family. PetB subfamily. In terms of assembly, the 4 large subunits of the cytochrome b6-f complex are cytochrome b6, subunit IV (17 kDa polypeptide, PetD), cytochrome f and the Rieske protein, while the 4 small subunits are PetG, PetL, PetM and PetN. The complex functions as a dimer. It depends on heme b as a cofactor. Heme c is required as a cofactor.

The protein localises to the plastid. It is found in the chloroplast thylakoid membrane. Functionally, component of the cytochrome b6-f complex, which mediates electron transfer between photosystem II (PSII) and photosystem I (PSI), cyclic electron flow around PSI, and state transitions. The sequence is that of Cytochrome b6 from Cucumis sativus (Cucumber).